A 364-amino-acid chain; its full sequence is PHD finger protein 6 (364 aa).

Serine 2 carries the N-acetylserine modification. 2 short sequence motifs (nuclear localization signal) span residues 13–16 and 129–133; these read RQRK and RKHKK. The segment at 14 to 52 adopts a C2HC pre-PHD-type 1 zinc-finger fold; sequence QRKCGFCKSNRDKECGQLLISENQKVAAHHKCMLFSSAL. An extended PHD1 domain (ePHD1) region spans residues 14 to 132; that stretch reads QRKCGFCKSN…IYMVYCRKHK (119 aa). Residues 80–132 form a PHD-type 1 zinc finger; the sequence is LMCSLCHCPGATIGCDVKTCHRTYHYHCALHDKAQIREKPSQGIYMVYCRKHK. Residues serine 138, serine 145, and serine 155 each carry the phosphoserine modification. Positions 139 to 211 are disordered; it reads EADLEESFNE…RSSPNDTRPK (73 aa). The Nucleolar localization signal signature appears at 157–169; sequence KTKKKSRKGRPRK. Over residues 157–171 the composition is skewed to basic residues; sequence KTKKKSRKGRPRKTN. Lysine 173 participates in a covalent cross-link: Glycyl lysine isopeptide (Lys-Gly) (interchain with G-Cter in SUMO2). Phosphoserine occurs at positions 183 and 199. A C2HC pre-PHD-type 2 zinc finger spans residues 209–249; sequence RPKCGFCHVGEEENEARGKLHIFNAKKAAAHYKCMLFSSGT. The extended PHD2 domain (ePHD2) stretch occupies residues 209–330; it reads RPKCGFCHVG…IYKLYCKNHS (122 aa). Residue lysine 227 forms a Glycyl lysine isopeptide (Lys-Gly) (interchain with G-Cter in SUMO2) linkage. Residues 278–330 form a PHD-type 2 zinc finger; sequence MKCTLCSQPGATIGCEIKACVKTYHYHCGVQDKAKYIENMSRGIYKLYCKNHS. The tract at residues 330–364 is disordered; sequence SGNDERDEEDEERESKSRGRVAIDQQLTQQQLNGN. Residues 354-364 are compositionally biased toward polar residues; that stretch reads QQLTQQQLNGN. Threonine 357 carries the phosphothreonine modification.

As to quaternary structure, interacts with UBTF. Interacts with the NuRD complex component RBBP4 (via the nucleolar localization motif), the interaction mediates transcriptional repression activity. In terms of tissue distribution, at 12.5 dpc it is highly expressed in the embryonic central nervous system and at lower levels in other tissues. Very low levels present throughout the adult brain.

It localises to the nucleus. The protein resides in the nucleolus. The protein localises to the chromosome. Its subcellular location is the centromere. It is found in the kinetochore. Functionally, transcriptional regulator that associates with ribosomal RNA promoters and suppresses ribosomal RNA (rRNA) transcription. The polypeptide is PHD finger protein 6 (Phf6) (Mus musculus (Mouse)).